Consider the following 641-residue polypeptide: SH2 domain-containing protein A (641 aa).

The disordered stretch occupies residues V355–R384. In terms of domain architecture, SH2 spans W547 to I641.

Phosphorylated on tyrosine residues. Expressed in roots, leaves, stems and flowers.

This chain is SH2 domain-containing protein A, found in Arabidopsis thaliana (Mouse-ear cress).